The following is a 290-amino-acid chain: Bifunctional protein FolD (290 aa).

NADP(+) is bound by residues 166–168 (GAS) and Ile-232.

It belongs to the tetrahydrofolate dehydrogenase/cyclohydrolase family. In terms of assembly, homodimer.

It carries out the reaction (6R)-5,10-methylene-5,6,7,8-tetrahydrofolate + NADP(+) = (6R)-5,10-methenyltetrahydrofolate + NADPH. The enzyme catalyses (6R)-5,10-methenyltetrahydrofolate + H2O = (6R)-10-formyltetrahydrofolate + H(+). It functions in the pathway one-carbon metabolism; tetrahydrofolate interconversion. Its function is as follows. Catalyzes the oxidation of 5,10-methylenetetrahydrofolate to 5,10-methenyltetrahydrofolate and then the hydrolysis of 5,10-methenyltetrahydrofolate to 10-formyltetrahydrofolate. This Proteus mirabilis (strain HI4320) protein is Bifunctional protein FolD.